The chain runs to 438 residues: Xylose isomerase (438 aa).

Residues Asp306 and Asp308 each coordinate Mg(2+).

Belongs to the xylose isomerase family. Homotetramer. Mg(2+) is required as a cofactor.

Its subcellular location is the cytoplasm. The enzyme catalyses alpha-D-xylose = alpha-D-xylulofuranose. The chain is Xylose isomerase from Pseudomonas fluorescens (strain SBW25).